The sequence spans 210 residues: Ribosomal RNA small subunit methyltransferase G (210 aa).

Residues Gly-80, Leu-85, 131–132 (VE), and Arg-146 contribute to the S-adenosyl-L-methionine site.

It belongs to the methyltransferase superfamily. RNA methyltransferase RsmG family.

It localises to the cytoplasm. It carries out the reaction guanosine(527) in 16S rRNA + S-adenosyl-L-methionine = N(7)-methylguanosine(527) in 16S rRNA + S-adenosyl-L-homocysteine. Functionally, specifically methylates the N7 position of guanine in position 527 of 16S rRNA. This is Ribosomal RNA small subunit methyltransferase G from Pasteurella multocida (strain Pm70).